The sequence spans 237 residues: uncharacterized protein (237 aa).

The 114-residue stretch at 3–116 (SALLIDDERF…RLAKTVQRLL (114 aa)) folds into the Response regulatory domain. The residue at position 54 (D54) is a 4-aspartylphosphate. Positions 135–236 (IPCTGLNRIV…LKELKEMLGF (102 aa)) constitute an HTH LytTR-type domain.

This is an uncharacterized protein from Vibrio cholerae serotype O1 (strain ATCC 39315 / El Tor Inaba N16961).